A 276-amino-acid chain; its full sequence is 3' cyclic ADP-D-ribose synthase HopAM1 (276 aa).

Positions 20-38 (VEASQVKSAGTSSTTNIDS) are enriched in polar residues. The disordered stretch occupies residues 20–39 (VEASQVKSAGTSSTTNIDSK). Residues 165–214 (KNGIAHAKKMAFFITPEWLGSDFCKQEFQWLSETKNKDIKSAFVIFKDVD) form a TIR domain region. Q190 is a catalytic residue.

Homodimer.

It localises to the host cytoplasm. The protein resides in the host cytosol. It carries out the reaction NAD(+) = 3'cADPR + nicotinamide + H(+). Functionally, NAD(+) hydrolase (NADase) that cleaves NAD(+) into nicotinamide and 3' cyclic ADP-D-ribose (3'cADPR, v2-cADPR). Upon infiltration of A.thaliana with this bacteria an effector-triggered immunity-like phenotype (ETI-like, cell death with severe chlorosis) is seen, 3'cADPR levels rise while NAD(+) levels remain constant. Plant immune responses are suppressed. Triggers hypersensitive response-like cell death in Nicotiana tabacum cv. Xanthi and N.benthamiana when transiently expressed, depletes NAD(+) in N.benthamiana. Causes cell death upon induction in yeast due to NAD(+) depletion and/or 3'cADPR itself. Transgenic A.thaliana expressing HopAM1 suppresses its plant immune system upon challenge; the plants produce 3'cADPR without significantly depleting NAD(+). The chain is 3' cyclic ADP-D-ribose synthase HopAM1 from Pseudomonas syringae pv. tomato (strain ATCC BAA-871 / DC3000).